We begin with the raw amino-acid sequence, 47 residues long: Small, acid-soluble spore protein N (47 aa).

Positions 1-47 (MSNPKRSPNHFAPNHIGTQPRAAGGNKGKQMQDQSGQHAQVIQTKGE) are disordered. Residues 29–47 (KQMQDQSGQHAQVIQTKGE) are compositionally biased toward polar residues.

The protein belongs to the SspN family.

It localises to the spore core. This is Small, acid-soluble spore protein N from Geobacillus thermodenitrificans (strain NG80-2).